A 256-amino-acid chain; its full sequence is Fumarate reductase iron-sulfur subunit (256 aa).

In terms of domain architecture, 2Fe-2S ferredoxin-type spans 7-97 (MNVEVLRYNP…HMRIEPLANF (91 aa)). Tyr-14 serves as a coordination point for a menaquinone. [2Fe-2S] cluster-binding residues include Cys-58, Cys-63, Cys-66, and Cys-78. Residues 151–180 (LEKYRQFSMCINCGLCYAACPQFGLNPEFL) enclose the 4Fe-4S ferredoxin-type domain. 3 residues coordinate [4Fe-4S] cluster: Cys-160, Cys-163, and Cys-166. Positions 170, 216, and 222 each coordinate [3Fe-4S] cluster. Cys-226 provides a ligand contact to [4Fe-4S] cluster. 237 to 240 (NQGK) is an a menaquinone binding site.

This sequence belongs to the succinate dehydrogenase/fumarate reductase iron-sulfur protein family. In terms of assembly, fumarate dehydrogenase forms part of an enzyme complex containing four subunits: a flavoprotein, an iron-sulfur, and two hydrophobic anchor proteins. [2Fe-2S] cluster is required as a cofactor. The cofactor is [3Fe-4S] cluster. Requires [4Fe-4S] cluster as cofactor.

Its subcellular location is the cell inner membrane. The enzyme catalyses a quinone + succinate = fumarate + a quinol. It carries out the reaction a menaquinone + succinate = a menaquinol + fumarate. This chain is Fumarate reductase iron-sulfur subunit (frdB), found in Haemophilus influenzae (strain ATCC 51907 / DSM 11121 / KW20 / Rd).